Here is a 284-residue protein sequence, read N- to C-terminus: 4-diphosphocytidyl-2-C-methyl-D-erythritol kinase (284 aa).

Lys14 is a catalytic residue. 98-108 (PMGGGLGGGSS) contacts ATP. Asp140 is a catalytic residue.

This sequence belongs to the GHMP kinase family. IspE subfamily.

The catalysed reaction is 4-CDP-2-C-methyl-D-erythritol + ATP = 4-CDP-2-C-methyl-D-erythritol 2-phosphate + ADP + H(+). Its pathway is isoprenoid biosynthesis; isopentenyl diphosphate biosynthesis via DXP pathway; isopentenyl diphosphate from 1-deoxy-D-xylulose 5-phosphate: step 3/6. In terms of biological role, catalyzes the phosphorylation of the position 2 hydroxy group of 4-diphosphocytidyl-2C-methyl-D-erythritol. The chain is 4-diphosphocytidyl-2-C-methyl-D-erythritol kinase from Shewanella halifaxensis (strain HAW-EB4).